Consider the following 302-residue polypeptide: CASP-like protein 4A2 (302 aa).

Residues 1-13 (MALQAQQQATPSP) show a composition bias toward polar residues. The tract at residues 1-134 (MALQAQQQAT…APPPHAQVRS (134 aa)) is disordered. Residues 1-154 (MALQAQQQAT…RKRRAAVMQR (154 aa)) are Cytoplasmic-facing. A compositionally biased stretch (low complexity) spans 40–60 (VVVASTHHAAAAARYVPPRAT). Positions 99 to 129 (KTPPPAPPLPAAPPPPPAASPAPAPRAPPPH) are enriched in pro residues. Residues 155–175 (AALLARAAAAGLCLAALAVLA) traverse the membrane as a helical segment. At 176-197 (SDTRRGWARDSYSNYAQFRYSE) the chain is on the extracellular side. A helical transmembrane segment spans residues 198-218 (AVNVVGFLYSVFQFVALAELM). At 219 to 238 (RRNKHLIPHPKRDLFDFTMD) the chain is on the cytoplasmic side. A helical transmembrane segment spans residues 239 to 256 (QVVAYLLISSSSSATARA). Residues 257 to 273 (SDLIENWGSDSFPSMAN) are Extracellular-facing. A helical membrane pass occupies residues 274–294 (GSIAISFVAFVVFAICSLISA). Over 295-302 (YNLFRRDM) the chain is Cytoplasmic.

This sequence belongs to the Casparian strip membrane proteins (CASP) family. As to quaternary structure, homodimer and heterodimers.

The protein localises to the cell membrane. The protein is CASP-like protein 4A2 of Zea mays (Maize).